We begin with the raw amino-acid sequence, 498 residues long: DEAD-box ATP-dependent RNA helicase 12 (498 aa).

Residues 1–114 form a disordered region; the sequence is MNTNRGRYPP…RLPPPDTRYQ (114 aa). Low complexity predominate over residues 27–65; it reads SYRQQQPPQDQQYVQRGYSQNPQQMQLQQQHQQQQQQQQ. Polar residues predominate over residues 74–96; it reads GNASNANEVVQQTTQPEASSDAN. The Q motif motif lies at 124 to 152; sequence NEFEDYFLKRDLLKGIYEKGFEKPSPIQE. The Helicase ATP-binding domain maps to 155–325; that stretch reads IPIALTGSDI…DRHLRKPYVI (171 aa). 168-175 provides a ligand contact to ATP; the sequence is AKNGTGKT. Phosphothreonine is present on T230. The short motif at 273–276 is the DEAD box element; sequence DEAD. The 161-residue stretch at 335–495 folds into the Helicase C-terminal domain; the sequence is GVTQYYAFVE…PIPSNIDQAI (161 aa).

Belongs to the DEAD box helicase family. DDX6/DHH1 subfamily.

The protein localises to the cytoplasm. The protein resides in the P-body. It catalyses the reaction ATP + H2O = ADP + phosphate + H(+). Functionally, ATP-dependent RNA helicase involved in mRNA turnover, and more specifically in mRNA decapping. In Arabidopsis thaliana (Mouse-ear cress), this protein is DEAD-box ATP-dependent RNA helicase 12 (RH12).